Reading from the N-terminus, the 126-residue chain is Holo-[acyl-carrier-protein] synthase (126 aa).

2 residues coordinate Mg(2+): aspartate 8 and glutamate 57.

It belongs to the P-Pant transferase superfamily. AcpS family. Mg(2+) is required as a cofactor.

The protein resides in the cytoplasm. The enzyme catalyses apo-[ACP] + CoA = holo-[ACP] + adenosine 3',5'-bisphosphate + H(+). In terms of biological role, transfers the 4'-phosphopantetheine moiety from coenzyme A to a Ser of acyl-carrier-protein. The polypeptide is Holo-[acyl-carrier-protein] synthase (Leptospira interrogans serogroup Icterohaemorrhagiae serovar copenhageni (strain Fiocruz L1-130)).